The following is a 67-amino-acid chain: DNA-directed RNA polymerase subunit omega (67 aa).

Belongs to the RNA polymerase subunit omega family. As to quaternary structure, the RNAP catalytic core consists of 2 alpha, 1 beta, 1 beta' and 1 omega subunit. When a sigma factor is associated with the core the holoenzyme is formed, which can initiate transcription.

The catalysed reaction is RNA(n) + a ribonucleoside 5'-triphosphate = RNA(n+1) + diphosphate. Functionally, promotes RNA polymerase assembly. Latches the N- and C-terminal regions of the beta' subunit thereby facilitating its interaction with the beta and alpha subunits. The polypeptide is DNA-directed RNA polymerase subunit omega (Listeria welshimeri serovar 6b (strain ATCC 35897 / DSM 20650 / CCUG 15529 / CIP 8149 / NCTC 11857 / SLCC 5334 / V8)).